The sequence spans 525 residues: Keratin, type II cytoskeletal 4 (525 aa).

Residues 1–145 are head; sequence MIARQSSVRG…DPEIQKIRTA (145 aa). Omega-N-methylarginine is present on Arg-13. The interval 146-181 is coil 1A; that stretch reads EREQIKTLNNKFASFIDKVRFLEQQNKVLETKWNLL. Positions 146–459 constitute an IF rod domain; that stretch reads EREQIKTLNN…KLLEGEECRM (314 aa). Residues 182 to 200 are linker 1; it reads QQQTTTTSPKSLDPFFETY. Positions 201-292 are coil 1B; it reads INALRKNLDT…VLYEAELAQM (92 aa). The linker 12 stretch occupies residues 293 to 316; the sequence is QTHVSDTSVVLSMDNNRNLDLDGI. The tract at residues 317–455 is coil 2; sequence IAEVRAQYED…ATYRKLLEGE (139 aa). The interval 456–524 is tail; that stretch reads ECRMSGECKS…SSATITKRSP (69 aa).

The protein belongs to the intermediate filament family. In terms of assembly, heterotetramer of two type I and two type II keratins. Keratin-4 is generally associated with keratin-13. Expressed in the dorsal and ventral epithelium of the tongue. Highest expression levels are detected in the suprabasal layer with low levels detected in the basal cell layer. Within the suprabasal layer expression is highest in the spinous cells, decreases in the granular cells and is not detected in the stratum corneum.

This chain is Keratin, type II cytoskeletal 4 (Krt4), found in Mus musculus (Mouse).